The primary structure comprises 101 residues: ATP-dependent Clp protease adapter protein ClpS (101 aa).

Belongs to the ClpS family. Binds to the N-terminal domain of the chaperone ClpA.

Involved in the modulation of the specificity of the ClpAP-mediated ATP-dependent protein degradation. In Mycobacterium bovis (strain ATCC BAA-935 / AF2122/97), this protein is ATP-dependent Clp protease adapter protein ClpS.